Consider the following 461-residue polypeptide: Fumarate hydratase class II (461 aa).

Substrate contacts are provided by residues Ser97 to Thr99, His127 to Asp130, Ser137 to Asn139, and Thr185. Residue His186 is the Proton donor/acceptor of the active site. Residue Ser316 is part of the active site. Substrate contacts are provided by residues Ser317 and Lys322–Asn324.

It belongs to the class-II fumarase/aspartase family. Fumarase subfamily. As to quaternary structure, homotetramer.

It is found in the cytoplasm. It carries out the reaction (S)-malate = fumarate + H2O. It participates in carbohydrate metabolism; tricarboxylic acid cycle; (S)-malate from fumarate: step 1/1. Functionally, involved in the TCA cycle. Catalyzes the stereospecific interconversion of fumarate to L-malate. This chain is Fumarate hydratase class II, found in Staphylococcus saprophyticus subsp. saprophyticus (strain ATCC 15305 / DSM 20229 / NCIMB 8711 / NCTC 7292 / S-41).